A 184-amino-acid polypeptide reads, in one-letter code: Protein GrpE (184 aa).

A compositionally biased stretch (basic and acidic residues) spans 1-10 (MSQETEKDLE). Positions 1-38 (MSQETEKDLEQTQNEELVEEAQSDEKKDQEVDPVEAAQ) are disordered.

Belongs to the GrpE family. In terms of assembly, homodimer.

It localises to the cytoplasm. Its function is as follows. Participates actively in the response to hyperosmotic and heat shock by preventing the aggregation of stress-denatured proteins, in association with DnaK and GrpE. It is the nucleotide exchange factor for DnaK and may function as a thermosensor. Unfolded proteins bind initially to DnaJ; upon interaction with the DnaJ-bound protein, DnaK hydrolyzes its bound ATP, resulting in the formation of a stable complex. GrpE releases ADP from DnaK; ATP binding to DnaK triggers the release of the substrate protein, thus completing the reaction cycle. Several rounds of ATP-dependent interactions between DnaJ, DnaK and GrpE are required for fully efficient folding. The polypeptide is Protein GrpE (Sulfurovum sp. (strain NBC37-1)).